We begin with the raw amino-acid sequence, 134 residues long: Transcription antitermination protein NusB (134 aa).

The protein belongs to the NusB family.

Its function is as follows. Involved in transcription antitermination. Required for transcription of ribosomal RNA (rRNA) genes. Binds specifically to the boxA antiterminator sequence of the ribosomal RNA (rrn) operons. This is Transcription antitermination protein NusB from Shewanella sediminis (strain HAW-EB3).